A 234-amino-acid polypeptide reads, in one-letter code: Sugar fermentation stimulation protein homolog (234 aa).

Belongs to the SfsA family.

This is Sugar fermentation stimulation protein homolog from Shewanella baltica (strain OS195).